The sequence spans 354 residues: Methionine import ATP-binding protein MetN (354 aa).

The 243-residue stretch at 8–250 (LDHIDITFHQ…PKEALTQEFI (243 aa)) folds into the ABC transporter domain. Residue 42-49 (GYSGAGKS) coordinates ATP.

This sequence belongs to the ABC transporter superfamily. Methionine importer (TC 3.A.1.24) family. As to quaternary structure, the complex is composed of two ATP-binding proteins (MetN), two transmembrane proteins (MetI) and a solute-binding protein (MetQ).

It is found in the cell membrane. It carries out the reaction L-methionine(out) + ATP + H2O = L-methionine(in) + ADP + phosphate + H(+). The catalysed reaction is D-methionine(out) + ATP + H2O = D-methionine(in) + ADP + phosphate + H(+). Part of the ABC transporter complex MetNIQ involved in methionine import. Responsible for energy coupling to the transport system. The protein is Methionine import ATP-binding protein MetN of Streptococcus pyogenes serotype M4 (strain MGAS10750).